The primary structure comprises 252 residues: Ribosomal RNA small subunit methyltransferase J (252 aa).

S-adenosyl-L-methionine contacts are provided by residues 105 to 106, 121 to 122, and aspartate 175; these read RD and ER.

This sequence belongs to the methyltransferase superfamily. RsmJ family.

It localises to the cytoplasm. It carries out the reaction guanosine(1516) in 16S rRNA + S-adenosyl-L-methionine = N(2)-methylguanosine(1516) in 16S rRNA + S-adenosyl-L-homocysteine + H(+). In terms of biological role, specifically methylates the guanosine in position 1516 of 16S rRNA. The protein is Ribosomal RNA small subunit methyltransferase J of Pasteurella multocida (strain Pm70).